A 170-amino-acid chain; its full sequence is Adenine phosphoribosyltransferase (170 aa).

Belongs to the purine/pyrimidine phosphoribosyltransferase family. Homodimer.

It is found in the cytoplasm. The enzyme catalyses AMP + diphosphate = 5-phospho-alpha-D-ribose 1-diphosphate + adenine. The protein operates within purine metabolism; AMP biosynthesis via salvage pathway; AMP from adenine: step 1/1. Its function is as follows. Catalyzes a salvage reaction resulting in the formation of AMP, that is energically less costly than de novo synthesis. This chain is Adenine phosphoribosyltransferase, found in Acaryochloris marina (strain MBIC 11017).